The primary structure comprises 360 residues: DNA primase large subunit PriL (360 aa).

C237, C309, C318, and C325 together coordinate [4Fe-4S] cluster. The disordered stretch occupies residues 340 to 360; it reads DDGDDDDLADWRDREDDDSPD.

Belongs to the eukaryotic-type primase large subunit family. As to quaternary structure, heterodimer of a small subunit (PriS) and a large subunit (PriL). [4Fe-4S] cluster serves as cofactor.

Regulatory subunit of DNA primase, an RNA polymerase that catalyzes the synthesis of short RNA molecules used as primers for DNA polymerase during DNA replication. Stabilizes and modulates the activity of the small subunit, increasing the rate of DNA synthesis, and conferring RNA synthesis capability. The DNA polymerase activity may enable DNA primase to also catalyze primer extension after primer synthesis. May also play a role in DNA repair. The sequence is that of DNA primase large subunit PriL from Halobacterium salinarum (strain ATCC 29341 / DSM 671 / R1).